A 91-amino-acid polypeptide reads, in one-letter code: MGLTETTLVLVSLAFFASAVAHNCQNGTRPASEEKREGCDYYCWNAETNSWDKFFFGNGERCFYNDGGEGLCQNGECHLTTDSSVPNDSDV.

The first 21 residues, 1 to 21 (MGLTETTLVLVSLAFFASAVA), serve as a signal peptide directing secretion. N-linked (GlcNAc...) asparagine glycans are attached at residues Asn-26 and Asn-87.

The protein belongs to the salp14 family. Post-translationally, glycosylated; deglycosylation largely abrogates the complement inhibitory effect. As to expression, nymph salivary gland (at protein level). Saliva (at protein level). Not detected in midgut.

It is found in the secreted. Functionally, inhibits the lectin pathway of complement system activation in the host by reducing binding of mannose-binding lectin and L-ficolin to their ligands. Does not affect the classical and alternative pathways of complement system activation in the host. In terms of biological role, (Microbial infection) Protects Borrelia garinii (strain A87S) from host complement-mediated killing by preventing deposition of host C5b-9 membrane attack complexes on the surface of spirochetes. Inhibits phagocytosis of B.garinii (strain A87S) by human neutrophils. Impairs Borrelia-induced complement-mediated chemotaxis of human polymorphonuclear leukocytes. (Microbial infection) Protects Borrelia burgdorferi (strain N40), which is resistant to normal human serum, from Borrelia-opsonizing antibody-mediated complement-dependent killing. This is Salivary lectin pathway inhibitor from Ixodes scapularis (Black-legged tick).